We begin with the raw amino-acid sequence, 1755 residues long: Transposon Ty1-DR1 Gag-Pol polyprotein (1755 aa).

Composition is skewed to polar residues over residues 1–10, 48–60, and 127–152; these read MESQQLSNYP, TKANSQQTTTPAS, and QSQFPQYPSSVGTPLSTPSPESGNTF. Disordered regions lie at residues 1–93, 126–173, and 352–421; these read MESQ…MMTQ, PQSQ…RPPP, and GSRN…SKST. Low complexity predominate over residues 153 to 165; it reads TDSSSADSDMTST. The RNA-binding stretch occupies residues 299-401; sequence NNGIHINNKV…NSKSKTARAH (103 aa). Positions 402–418 are enriched in low complexity; that stretch reads NVSTSNNSPSTDNDSIS. S416 carries the phosphoserine modification. D461 (for protease activity; shared with dimeric partner) is an active-site residue. Residues 583–640 form an integrase-type zinc finger-like region; sequence NVHTSESTRKYPYPFIHRMLAHANAQTIRYSLKNNTITYFNESDVDWSSAIDYQCPDC. The Integrase catalytic domain maps to 660–835; that stretch reads NSYEPFQYLH…AGLDISTLLP (176 aa). Positions 671 and 736 each coordinate Mg(2+). Disordered stretches follow at residues 956 to 1087, 1092 to 1111, and 1130 to 1187; these read SKAV…ETEK, RSPSIDASPPENNSSHNIVP, and DLPL…DNET. The segment covering 960–969 has biased composition (low complexity); it reads SPTDSTPPST. A compositionally biased stretch (polar residues) spans 1005–1015; that stretch reads STPQISNIEST. The span at 1038 to 1053 shows a compositional bias: basic and acidic residues; it reads ESSHASKSKDFRHSDS. Composition is skewed to polar residues over residues 1054–1082 and 1101–1111; these read YSENETNHTNVPISSTGGTNNKTVPQISD and PENNSSHNIVP. The short motif at 1178 to 1212 is the Bipartite nuclear localization signal element; it reads KKRSLEDNETEIKVSRDTWNTKNMRSLEPPRSKKR. A Reverse transcriptase Ty1/copia-type domain is found at 1338–1476; the sequence is NNYYITQLDI…DILGLEIKYQ (139 aa). Mg(2+)-binding residues include D1346, D1427, D1428, D1610, E1652, and D1685. The RNase H Ty1/copia-type domain occupies 1610–1752; sequence DASYGNQPYY…IKTFKLLTNK (143 aa).

As to quaternary structure, the capsid protein forms a homotrimer, from which the VLPs are assembled. The protease is a homodimer, whose active site consists of two apposed aspartic acid residues. Post-translationally, initially, virus-like particles (VLPs) are composed of the structural unprocessed proteins Gag and Gag-Pol, and also contain the host initiator methionine tRNA (tRNA(i)-Met) which serves as a primer for minus-strand DNA synthesis, and a dimer of genomic Ty RNA. Processing of the polyproteins occurs within the particle and proceeds by an ordered pathway, called maturation. First, the protease (PR) is released by autocatalytic cleavage of the Gag-Pol polyprotein yielding capsid protein p45 and a Pol-p154 precursor protein. This cleavage is a prerequisite for subsequent processing of Pol-p154 at the remaining sites to release the mature structural and catalytic proteins. Maturation takes place prior to the RT reaction and is required to produce transposition-competent VLPs.

Its subcellular location is the cytoplasm. It is found in the nucleus. The catalysed reaction is DNA(n) + a 2'-deoxyribonucleoside 5'-triphosphate = DNA(n+1) + diphosphate. It carries out the reaction Endonucleolytic cleavage to 5'-phosphomonoester.. Functionally, capsid protein (CA) is the structural component of the virus-like particle (VLP), forming the shell that encapsulates the retrotransposons dimeric RNA genome. The particles are assembled from trimer-clustered units and there are holes in the capsid shells that allow for the diffusion of macromolecules. CA also has nucleocapsid-like chaperone activity, promoting primer tRNA(i)-Met annealing to the multipartite primer-binding site (PBS), dimerization of Ty1 RNA and initiation of reverse transcription. Its function is as follows. The aspartyl protease (PR) mediates the proteolytic cleavages of the Gag and Gag-Pol polyproteins after assembly of the VLP. In terms of biological role, reverse transcriptase/ribonuclease H (RT) is a multifunctional enzyme that catalyzes the conversion of the retro-elements RNA genome into dsDNA within the VLP. The enzyme displays a DNA polymerase activity that can copy either DNA or RNA templates, and a ribonuclease H (RNase H) activity that cleaves the RNA strand of RNA-DNA heteroduplexes during plus-strand synthesis and hydrolyzes RNA primers. The conversion leads to a linear dsDNA copy of the retrotransposon that includes long terminal repeats (LTRs) at both ends. Integrase (IN) targets the VLP to the nucleus, where a subparticle preintegration complex (PIC) containing at least integrase and the newly synthesized dsDNA copy of the retrotransposon must transit the nuclear membrane. Once in the nucleus, integrase performs the integration of the dsDNA into the host genome. The chain is Transposon Ty1-DR1 Gag-Pol polyprotein (TY1B-DR1) from Saccharomyces cerevisiae (strain ATCC 204508 / S288c) (Baker's yeast).